The following is a 101-amino-acid chain: Small ribosomal subunit protein uS14A (101 aa).

This sequence belongs to the universal ribosomal protein uS14 family. In terms of assembly, part of the 30S ribosomal subunit. Contacts proteins S3 and S10.

Binds 16S rRNA, required for the assembly of 30S particles and may also be responsible for determining the conformation of the 16S rRNA at the A site. The sequence is that of Small ribosomal subunit protein uS14A from Salinispora tropica (strain ATCC BAA-916 / DSM 44818 / JCM 13857 / NBRC 105044 / CNB-440).